The sequence spans 424 residues: Hemagglutinin-esterase (424 aa).

The first 16 residues, 1 to 16, serve as a signal peptide directing secretion; the sequence is MFLLPRFILVSCIIGS. Residues 7–127 are esterase domain 1; it reads FILVSCIIGS…SNDIWMQNKG (121 aa). The Virion surface segment spans residues 17–392; it reads LGFYNPPTNV…PICVYDPLPV (376 aa). The active-site Nucleophile is the Ser40. Cys44 and Cys65 are disulfide-bonded. Asn54, Asn89, Asn114, Asn153, Asn236, and Asn301 each carry an N-linked (GlcNAc...) asparagine; by host glycan. Cystine bridges form between Cys113-Cys162, Cys197-Cys276, and Cys205-Cys249. The interval 128–266 is receptor binding; it reads LFYTQVYKNM…GNYLAISNEL (139 aa). Residues 267–379 are esterase domain 2; it reads LLTVPTKAIC…RCPTAADINN (113 aa). Cys307 and Cys312 are disulfide-bonded. N-linked (GlcNAc...) asparagine; by host glycosylation occurs at Asn316. Residues Asp326 and His329 each act as charge relay system in the active site. Cys347 and Cys371 are oxidised to a cystine. Asn358 carries an N-linked (GlcNAc...) asparagine; by host glycan. A helical transmembrane segment spans residues 393-413; the sequence is ILLGILLGVAVIIIVVLLLYF. Residues 414-424 are Intravirion-facing; it reads MVDNGTRLHDA. The N-linked (GlcNAc...) asparagine; by host glycan is linked to Asn417.

It belongs to the influenza type C/coronaviruses hemagglutinin-esterase family. In terms of assembly, homodimer; disulfide-linked. Forms a complex with the M protein in the pre-Golgi. Associates then with S-M complex to form a ternary complex S-M-HE. Post-translationally, N-glycosylated in the host RER.

It is found in the virion membrane. Its subcellular location is the host cell membrane. The enzyme catalyses N-acetyl-9-O-acetylneuraminate + H2O = N-acetylneuraminate + acetate + H(+). It catalyses the reaction N-acetyl-4-O-acetylneuraminate + H2O = N-acetylneuraminate + acetate + H(+). In terms of biological role, structural protein that makes short spikes at the surface of the virus. Contains receptor binding and receptor-destroying activities. Mediates de-O-acetylation of N-acetyl-4-O-acetylneuraminic acid, which is probably the receptor determinant recognized by the virus on the surface of erythrocytes and susceptible cells. This receptor-destroying activity is important for virus release as it probably helps preventing self-aggregation and ensures the efficient spread of the progeny virus from cell to cell. May serve as a secondary viral attachment protein for initiating infection, the spike protein being the major one. May become a target for both the humoral and the cellular branches of the immune system. The polypeptide is Hemagglutinin-esterase (Homo sapiens (Human)).